Consider the following 504-residue polypeptide: Maturase K (504 aa).

This sequence belongs to the intron maturase 2 family. MatK subfamily.

It is found in the plastid. The protein localises to the chloroplast. In terms of biological role, usually encoded in the trnK tRNA gene intron. Probably assists in splicing its own and other chloroplast group II introns. This is Maturase K from Barbarea vulgaris (Yellow rocket).